A 389-amino-acid chain; its full sequence is Putative glutamate--cysteine ligase 2 (389 aa).

The protein belongs to the glutamate--cysteine ligase type 2 family. YbdK subfamily.

The enzyme catalyses L-cysteine + L-glutamate + ATP = gamma-L-glutamyl-L-cysteine + ADP + phosphate + H(+). In terms of biological role, ATP-dependent carboxylate-amine ligase which exhibits weak glutamate--cysteine ligase activity. This chain is Putative glutamate--cysteine ligase 2, found in Rhodospirillum rubrum (strain ATCC 11170 / ATH 1.1.1 / DSM 467 / LMG 4362 / NCIMB 8255 / S1).